Reading from the N-terminus, the 465-residue chain is WAS protein family homolog 2 (465 aa).

The interval 1–54 (MTPVRMQHSLAGQTYAVPLIQPDLRREEAVQQMADALQYLQKVSGDIFSRISQQ) is required for WASH complex assembly. The WHD1 stretch occupies residues 1–167 (MTPVRMQHSL…EGLGGLPSNI (167 aa)). K220 is covalently cross-linked (Glycyl lysine isopeptide (Lys-Gly) (interchain with G-Cter in ubiquitin)). 2 disordered regions span residues 297 to 407 (QDGV…QGGH) and 422 to 465 (GISG…DWES). Residues 302 to 314 (TPPPPPPPPPPAP) are compositionally biased toward pro residues. The tract at residues 349–465 (QGAPREVVDP…AEEDEDDWES (117 aa)) is VCA. The region spanning 361 to 383 (GRATLLESIRQAGGIGKAKLRSM) is the WH2 domain. Residues 382–398 (SMKERKLEKKKQKEQEQ) are compositionally biased toward basic and acidic residues. The segment covering 424 to 436 (SGKGPGAGEGPGG) has biased composition (gly residues). Residues 456–465 (AEEDEDDWES) show a composition bias toward acidic residues.

It belongs to the WASH1 family. As to quaternary structure, component of the WASH core complex also described as WASH regulatory complex (SHRC) composed of WASH (WASHC1, WASH2P or WASH3P), WASHC2 (WASHC2A or WASHC2C), WASHC3, WASHC4 and WASHC5. The WASH core complex associates with the F-actin-capping protein dimer (formed by CAPZA1, CAPZA2 or CAPZA3 and CAPZB) in a transient or substoichiometric manner which was initially described as WASH complex. Interacts (via WHD1 region) with WASHC2C; the interaction is direct. Interacts with alpha-tubulin. Interacts with BECN1; WASHC1 and AMBRA1 can competitively interact with BECN1. Interacts with BLOC1S2; may associate with the BLOC-1 complex. Interacts with tubulin gamma chain (TUBG1 or TUBG2). Interacts with EXOC1, EXOC4, EXOC8; in MMP14-positive endosomes in breast tumor cells; indicative for an association with the exocyst complex.

The protein localises to the early endosome membrane. It localises to the recycling endosome membrane. Its subcellular location is the late endosome. It is found in the cytoplasmic vesicle. The protein resides in the autophagosome. The protein localises to the cytoplasm. It localises to the cytoskeleton. Its subcellular location is the microtubule organizing center. It is found in the centrosome. The protein resides in the centriole. Functionally, acts as a nucleation-promoting factor at the surface of endosomes, where it recruits and activates the Arp2/3 complex to induce actin polymerization, playing a key role in the fission of tubules that serve as transport intermediates during endosome sorting. Involved in endocytic trafficking of EGF. Involved in transferrin receptor recycling. Regulates the trafficking of endosomal alpha5beta1 integrin to the plasma membrane and involved in invasive cell migration. In T-cells involved in endosome-to-membrane recycling of receptors including T-cell receptor (TCR), CD28 and ITGAL; proposed to be implicated in T-cell proliferation and effector function. In dendritic cells involved in endosome-to-membrane recycling of major histocompatibility complex (MHC) class II probably involving retromer and subsequently allowing antigen sampling, loading and presentation during T-cell activation. Involved in Arp2/3 complex-dependent actin assembly driving Salmonella typhimurium invasion independent of ruffling. Involved in the exocytosis of MMP14 leading to matrix remodeling during invasive migration and implicating late endosome-to-plasma membrane tubular connections and cooperation with the exocyst complex. Involved in negative regulation of autophagy independently from its role in endosomal sorting by inhibiting BECN1 ubiquitination to inactivate PIK3C3/Vps34 activity. In Homo sapiens (Human), this protein is WAS protein family homolog 2 (WASH2P).